Reading from the N-terminus, the 1905-residue chain is Low-density lipoprotein receptor-related protein 4 (1905 aa).

The signal sequence occupies residues 1–20 (MRRWWGALLLGALLCAHGIA). Topologically, residues 21–1725 (SSLECACGRS…AAPGEGLHVS (1705 aa)) are extracellular. LDL-receptor class A domains follow at residues 26 to 67 (ACGR…DGCT), 70 to 106 (TCSP…QDCP), 109 to 144 (ECEE…EQCD), 147 to 183 (KCSD…ESCP), 190 to 226 (PCNL…SDCS), 230 to 266 (PCRS…RNCT), 269 to 305 (MCTA…ENCE), and 311 to 350 (QCAS…QNCR). 30 cysteine pairs are disulfide-bonded: C27–C44, C34–C57, C51–C66, C71–C83, C78–C96, C90–C105, C110–C122, C117–C135, C129–C143, C148–C160, C155–C173, C167–C182, C191–C203, C198–C216, C210–C225, C231–C243, C238–C256, C250–C265, C270–C282, C277–C295, C289–C304, C312–C324, C319–C337, C331–C349, C358–C369, C365–C378, C380–C393, C399–C409, C405–C418, and C420–C433. N-linked (GlcNAc...) asparagine glycosylation is present at N264. Positions 354-394 (GEENCNVNNGGCAQKCQMVRGAVQCTCHTGYRLTEDGRTCQ) constitute an EGF-like 1; atypical domain. Residues 395–434 (DVNECAEEGYCSQGCTNTEGAFQCWCEAGYELRPDRRSCK) form the EGF-like 2; calcium-binding domain. 5 LDL-receptor class B repeats span residues 480–522 (ELVF…DWVH), 523–565 (DKLY…HPME), 566–609 (GTIY…DYAG), 610–652 (RRMY…FEDS), and 653–693 (LYWT…LHPQ). A glycan (N-linked (GlcNAc...) asparagine) is linked at N498. Residues 698-737 (GKNRCGDNNGGCTHLCLPSGQNYTCACPTGFRKINSHACA) enclose the EGF-like 3 domain. Disulfide bonds link C702–C713, C709–C722, and C724–C736. N719 carries an N-linked (GlcNAc...) asparagine glycan. LDL-receptor class B repeat units follow at residues 785–827 (DHVY…DWVT), 828–870 (NKLY…EPMG), 871–914 (GYMY…DYGS), 915–956 (QRLY…LYGQ), and 957–998 (RIYW…FHRQ). N901 carries N-linked (GlcNAc...) asparagine glycosylation. The N-linked (GlcNAc...) asparagine glycan is linked to N1077. LDL-receptor class B repeat units follow at residues 1093–1135 (GKVY…DAIG), 1136–1178 (RKVY…YHEM), 1179–1222 (GFMY…DKTS), 1223–1263 (SQLL…LLDS), 1264–1306 (YIYW…DRAQ), 1397–1439 (GKVY…DWVA), 1440–1482 (RNLY…FPRK), 1483–1526 (GYLF…DYDT), 1527–1568 (RRIY…QDRW), and 1569–1610 (IYWT…SPQR). N-linked (GlcNAc...) asparagine glycans are attached at residues N1415 and N1467. Residues 1661–1696 (ATSMNEKSPVLPNTLPTTLHSSTTKTRTSLEGAGGR) are disordered. Positions 1674–1690 (TLPTTLHSSTTKTRTSL) are enriched in low complexity. A helical membrane pass occupies residues 1726-1746 (YAIGGLLSILLILLVIAALML). Residues 1747-1905 (YRHRKSKFTD…ERKLSSESQV (159 aa)) lie on the Cytoplasmic side of the membrane. The disordered stretch occupies residues 1852-1905 (ASSGSLDDTETEQLLQEEQSECSSVHTAATPERRGSLPDTGWKHERKLSSESQV). Residues 1882-1905 (PERRGSLPDTGWKHERKLSSESQV) are compositionally biased toward basic and acidic residues.

This sequence belongs to the LDLR family. In terms of assembly, homooligomer. Interacts with MUSK; the heterodimer forms an AGRIN receptor complex that binds AGRIN resulting in activation of MUSK. Interacts (via the extracellular domain) with SOST; the interaction facilitates the inhibition of Wnt signaling. Interacts with MESD; the interaction promotes glycosylation of LRP4 and its cell-surface expression. Post-translationally, N-glycosylation is required for cell surface location.

It localises to the cell membrane. Its function is as follows. Mediates SOST-dependent inhibition of bone formation. Functions as a specific facilitator of SOST-mediated inhibition of Wnt signaling. Plays a key role in the formation and the maintenance of the neuromuscular junction (NMJ), the synapse between motor neuron and skeletal muscle. Directly binds AGRIN and recruits it to the MUSK signaling complex. Mediates the AGRIN-induced phosphorylation of MUSK, the kinase of the complex. The activation of MUSK in myotubes induces the formation of NMJ by regulating different processes including the transcription of specific genes and the clustering of AChR in the postsynaptic membrane. Alternatively, may be involved in the negative regulation of the canonical Wnt signaling pathway, being able to antagonize the LRP6-mediated activation of this pathway. More generally, has been proposed to function as a cell surface endocytic receptor binding and internalizing extracellular ligands for degradation by lysosomes. Plays an essential role in the process of digit differentiation. The polypeptide is Low-density lipoprotein receptor-related protein 4 (Lrp4) (Mus musculus (Mouse)).